A 126-amino-acid chain; its full sequence is Large ribosomal subunit protein bL12 (126 aa).

The protein belongs to the bacterial ribosomal protein bL12 family. In terms of assembly, homodimer. Part of the ribosomal stalk of the 50S ribosomal subunit. Forms a multimeric L10(L12)X complex, where L10 forms an elongated spine to which 2 to 4 L12 dimers bind in a sequential fashion. Binds GTP-bound translation factors.

Functionally, forms part of the ribosomal stalk which helps the ribosome interact with GTP-bound translation factors. Is thus essential for accurate translation. This Trichlorobacter lovleyi (strain ATCC BAA-1151 / DSM 17278 / SZ) (Geobacter lovleyi) protein is Large ribosomal subunit protein bL12.